A 161-amino-acid polypeptide reads, in one-letter code: UPF0178 protein BR1979/BS1330_I1973 (161 aa).

Belongs to the UPF0178 family.

The polypeptide is UPF0178 protein BR1979/BS1330_I1973 (Brucella suis biovar 1 (strain 1330)).